We begin with the raw amino-acid sequence, 157 residues long: 2-C-methyl-D-erythritol 2,4-cyclodiphosphate synthase (157 aa).

Positions 8 and 10 each coordinate a divalent metal cation. Residues 8-10 (DVH) and 34-35 (HS) each bind 4-CDP-2-C-methyl-D-erythritol 2-phosphate. A divalent metal cation is bound at residue histidine 42. 4-CDP-2-C-methyl-D-erythritol 2-phosphate is bound by residues 56–58 (DIG), 61–65 (FPDTD), 100–106 (AQAPKMA), 132–135 (TTTE), phenylalanine 139, and arginine 142.

The protein belongs to the IspF family. In terms of assembly, homotrimer. Requires a divalent metal cation as cofactor.

The catalysed reaction is 4-CDP-2-C-methyl-D-erythritol 2-phosphate = 2-C-methyl-D-erythritol 2,4-cyclic diphosphate + CMP. It participates in isoprenoid biosynthesis; isopentenyl diphosphate biosynthesis via DXP pathway; isopentenyl diphosphate from 1-deoxy-D-xylulose 5-phosphate: step 4/6. Its function is as follows. Involved in the biosynthesis of isopentenyl diphosphate (IPP) and dimethylallyl diphosphate (DMAPP), two major building blocks of isoprenoid compounds. Catalyzes the conversion of 4-diphosphocytidyl-2-C-methyl-D-erythritol 2-phosphate (CDP-ME2P) to 2-C-methyl-D-erythritol 2,4-cyclodiphosphate (ME-CPP) with a corresponding release of cytidine 5-monophosphate (CMP). This Pseudomonas fluorescens (strain ATCC BAA-477 / NRRL B-23932 / Pf-5) protein is 2-C-methyl-D-erythritol 2,4-cyclodiphosphate synthase.